The primary structure comprises 185 residues: Inner membrane-spanning protein YciB (185 aa).

A run of 5 helical transmembrane segments spans residues 19-39, 49-69, 72-92, 122-142, and 150-170; these read IHGIYTATEVLIVAAILLMAW, TMTWVSTLLILTFGGLTLYFH, TFIKIKPSILYVLFAAALLFT, GYWIAFFLFGAVLNLIVAYAF, and FKLFGMLAITVIFVLFQAVVI.

The protein belongs to the YciB family.

The protein localises to the cell inner membrane. In terms of biological role, plays a role in cell envelope biogenesis, maintenance of cell envelope integrity and membrane homeostasis. This Acidithiobacillus ferrooxidans (strain ATCC 23270 / DSM 14882 / CIP 104768 / NCIMB 8455) (Ferrobacillus ferrooxidans (strain ATCC 23270)) protein is Inner membrane-spanning protein YciB.